We begin with the raw amino-acid sequence, 561 residues long: Terpene synthase 3 (561 aa).

4 residues coordinate Mg(2+): Asp-315, Asp-319, Asp-458, and Glu-466. A DDXXD motif motif is present at residues 315–319 (DDVYD).

This sequence belongs to the terpene synthase family. Tpsa subfamily. Mg(2+) serves as cofactor. Mn(2+) is required as a cofactor. As to expression, mostly expressed in stems amd leaves, and, to a lower extent, in roots and fruits.

It catalyses the reaction (2E,6E)-farnesyl diphosphate = germacrene D + diphosphate. It carries out the reaction (2E,6E)-farnesyl diphosphate = alpha-copaene + diphosphate. It functions in the pathway secondary metabolite biosynthesis; terpenoid biosynthesis. Functionally, sesquiterpene synthase involved in the biosynthesis of volatile compounds that contribute to the characteristic flavors of black pepper. Mediates the conversion of (2E,6E)-farnesyl diphosphate (FPP) into alpha-copaene and germacrene D. The chain is Terpene synthase 3 from Piper nigrum (Black pepper).